We begin with the raw amino-acid sequence, 195 residues long: Anthranilate synthase component 2 (195 aa).

The 195-residue stretch at 1–195 folds into the Glutamine amidotransferase type-1 domain; that stretch reads MILIIDNYDS…LKNFLSLSYG (195 aa). L-glutamine is bound at residue 52–54; sequence GPG. C79 serves as the catalytic Nucleophile; for GATase activity. Residues Q83 and 129–130 each bind L-glutamine; that span reads SL. Residues H173 and E175 contribute to the active site.

In terms of assembly, tetramer of two components I and two components II.

It localises to the plastid. It is found in the chloroplast. The catalysed reaction is chorismate + L-glutamine = anthranilate + pyruvate + L-glutamate + H(+). It participates in amino-acid biosynthesis; L-tryptophan biosynthesis; L-tryptophan from chorismate: step 1/5. The polypeptide is Anthranilate synthase component 2 (trpG) (Cyanidium caldarium (Red alga)).